A 403-amino-acid chain; its full sequence is D-mannonate dehydratase (403 aa).

Residues asparagine 38 and histidine 123 each contribute to the substrate site. The active-site Proton donor/acceptor is tyrosine 160. Aspartate 211 provides a ligand contact to Mg(2+). Catalysis depends on histidine 213, which acts as the Proton donor/acceptor. Residues glutamate 237 and glutamate 263 each coordinate Mg(2+). Glutamate 263, arginine 284, histidine 313, aspartate 317, and glutamate 340 together coordinate substrate.

Belongs to the mandelate racemase/muconate lactonizing enzyme family. GalD subfamily. Requires Mg(2+) as cofactor.

The enzyme catalyses D-mannonate = 2-dehydro-3-deoxy-D-gluconate + H2O. It participates in carbohydrate metabolism; pentose and glucuronate interconversion. Catalyzes the dehydration of D-mannonate. Has no detectable activity with a panel of 70 other acid sugars (in vitro). The chain is D-mannonate dehydratase from Sphingomonas sp. (strain SKA58).